The chain runs to 89 residues: Putative sodium channel toxin Ts30 (89 aa).

An N-terminal signal peptide occupies residues 1–17 (MFKLAIILALLFFGARA). Residues 21–85 (RDGYPILSDG…FGDSGTPECH (65 aa)) form the LCN-type CS-alpha/beta domain. Intrachain disulfides connect Cys-31–Cys-84, Cys-35–Cys-59, Cys-44–Cys-64, and Cys-48–Cys-66.

Expressed by the venom gland.

The protein resides in the secreted. The sequence is that of Putative sodium channel toxin Ts30 from Tityus serrulatus (Brazilian scorpion).